The following is a 192-amino-acid chain: Na(+)-translocating ferredoxin:NAD(+) oxidoreductase complex subunit A (192 aa).

A run of 6 helical transmembrane segments spans residues 4–24 (IFIM…FLGI), 38–58 (VGMG…TYVV), 71–91 (LQTI…EMII), 101–121 (ALGV…VALI), 133–153 (IFNG…FAGI), and 169–189 (FPIA…FSGM).

This sequence belongs to the NqrDE/RnfAE family. The complex is composed of six subunits: RnfA, RnfB, RnfC, RnfD, RnfE and RnfG.

The protein localises to the cell membrane. The enzyme catalyses 2 reduced [2Fe-2S]-[ferredoxin] + Na(+)(in) + NAD(+) + H(+) = 2 oxidized [2Fe-2S]-[ferredoxin] + Na(+)(out) + NADH. Part of a membrane-bound complex that couples electron transfer with translocation of ions across the membrane. Couples electron transfer from reduced ferredoxin to NAD(+) with electrogenic movement of Na(+) out of the cell. Involved in caffeate respiration. This is Na(+)-translocating ferredoxin:NAD(+) oxidoreductase complex subunit A from Acetobacterium woodii (strain ATCC 29683 / DSM 1030 / JCM 2381 / KCTC 1655 / WB1).